The primary structure comprises 348 residues: D-erythrose-4-phosphate dehydrogenase (348 aa).

12–13 (RI) lines the NAD(+) pocket. Residues 154–156 (SCT), Arg-200, 213–214 (TR), and Arg-236 contribute to the substrate site. Cys-155 acts as the Nucleophile in catalysis. An NAD(+)-binding site is contributed by Asn-318.

The protein belongs to the glyceraldehyde-3-phosphate dehydrogenase family. Epd subfamily. Homotetramer.

The protein resides in the cytoplasm. The catalysed reaction is D-erythrose 4-phosphate + NAD(+) + H2O = 4-phospho-D-erythronate + NADH + 2 H(+). It participates in cofactor biosynthesis; pyridoxine 5'-phosphate biosynthesis; pyridoxine 5'-phosphate from D-erythrose 4-phosphate: step 1/5. Catalyzes the NAD-dependent conversion of D-erythrose 4-phosphate to 4-phosphoerythronate. In Erwinia tasmaniensis (strain DSM 17950 / CFBP 7177 / CIP 109463 / NCPPB 4357 / Et1/99), this protein is D-erythrose-4-phosphate dehydrogenase.